The primary structure comprises 185 residues: Guanylate kinase (185 aa).

The 179-residue stretch at 3-181 (TRMIIVAAPS…SYGEFKKIVE (179 aa)) folds into the Guanylate kinase-like domain. 10 to 17 (APSGAGKS) contacts ATP.

The protein belongs to the guanylate kinase family.

It is found in the cytoplasm. It carries out the reaction GMP + ATP = GDP + ADP. Functionally, essential for recycling GMP and indirectly, cGMP. In Bdellovibrio bacteriovorus (strain ATCC 15356 / DSM 50701 / NCIMB 9529 / HD100), this protein is Guanylate kinase.